Here is a 310-residue protein sequence, read N- to C-terminus: Fructose-bisphosphate aldolase/6-deoxy-5-ketofructose 1-phosphate synthase (310 aa).

Residues 48 to 49 (DQ), histidine 53, aspartate 57, and tryptophan 180 contribute to the substrate site. Tyrosine 182 serves as the catalytic Proton donor. Substrate is bound by residues arginine 184, 213 to 215 (KVN), 241 to 243 (AGG), and 270 to 271 (GR). Lysine 213 functions as the Schiff-base intermediate with dihydroxyacetone-P in the catalytic mechanism. Catalysis depends on lysine 213, which acts as the Schiff-base intermediate with substrate.

Belongs to the DeoC/FbaB aldolase family.

The catalysed reaction is beta-D-fructose 1,6-bisphosphate = D-glyceraldehyde 3-phosphate + dihydroxyacetone phosphate. It carries out the reaction beta-D-fructose 1,6-bisphosphate + methylglyoxal = 1-deoxy-D-threo-hexo-2,5-diulose 6-phosphate + D-glyceraldehyde 3-phosphate. It catalyses the reaction beta-D-fructose 1-phosphate + methylglyoxal = 1-deoxy-D-threo-hexo-2,5-diulose 6-phosphate + D-glyceraldehyde. It functions in the pathway aromatic compound metabolism. Catalyzes the transaldolization of either fructose-1-P or fructose-1,6-bisphosphate with methylglyoxal to produce 6-deoxy-5-ketofructose-1-phosphate (DKFP). Also catalyzes the reversible aldol condensation of dihydroxyacetone phosphate (DHAP or glycerone-phosphate) with glyceraldehyde 3-phosphate (G3P or GAP) to produce fructose 1,6-bisphosphate (FBP). The protein is Fructose-bisphosphate aldolase/6-deoxy-5-ketofructose 1-phosphate synthase of Methanocaldococcus jannaschii (strain ATCC 43067 / DSM 2661 / JAL-1 / JCM 10045 / NBRC 100440) (Methanococcus jannaschii).